The sequence spans 82 residues: Small ribosomal subunit protein bS16 (82 aa).

Belongs to the bacterial ribosomal protein bS16 family.

The protein is Small ribosomal subunit protein bS16 of Haemophilus influenzae (strain 86-028NP).